We begin with the raw amino-acid sequence, 207 residues long: Holliday junction branch migration complex subunit RuvA (207 aa).

A domain I region spans residues 1 to 64 (MIGLISGQVQ…EDAQLLYGFI (64 aa)). Residues 65–143 (DRKERDVFRQ…NIEVDNSNLE (79 aa)) form a domain II region. The segment at 144-152 (FAIQPAPIS) is flexible linker. The domain III stretch occupies residues 153–207 (AEDSIIAEVEGALMSLGYKEKEAQQAIKAAKSNGETFADTQSLLKATLQQFQSFK).

It belongs to the RuvA family. In terms of assembly, homotetramer. Forms an RuvA(8)-RuvB(12)-Holliday junction (HJ) complex. HJ DNA is sandwiched between 2 RuvA tetramers; dsDNA enters through RuvA and exits via RuvB. An RuvB hexamer assembles on each DNA strand where it exits the tetramer. Each RuvB hexamer is contacted by two RuvA subunits (via domain III) on 2 adjacent RuvB subunits; this complex drives branch migration. In the full resolvosome a probable DNA-RuvA(4)-RuvB(12)-RuvC(2) complex forms which resolves the HJ.

It is found in the cytoplasm. The RuvA-RuvB-RuvC complex processes Holliday junction (HJ) DNA during genetic recombination and DNA repair, while the RuvA-RuvB complex plays an important role in the rescue of blocked DNA replication forks via replication fork reversal (RFR). RuvA specifically binds to HJ cruciform DNA, conferring on it an open structure. The RuvB hexamer acts as an ATP-dependent pump, pulling dsDNA into and through the RuvAB complex. HJ branch migration allows RuvC to scan DNA until it finds its consensus sequence, where it cleaves and resolves the cruciform DNA. The sequence is that of Holliday junction branch migration complex subunit RuvA from Psychrobacter arcticus (strain DSM 17307 / VKM B-2377 / 273-4).